Reading from the N-terminus, the 463-residue chain is NADH dehydrogenase [ubiquinone] iron-sulfur protein 2, mitochondrial (463 aa).

Residues M1 to G33 constitute a mitochondrion transit peptide. At K62 the chain carries N6-acetyllysine. R118 is subject to Symmetric dimethylarginine. Residues C326, C332, and C347 each contribute to the [4Fe-4S] cluster site.

This sequence belongs to the complex I 49 kDa subunit family. In terms of assembly, core subunit of respiratory chain NADH dehydrogenase (Complex I) which is composed of 45 different subunits. Component of the iron-sulfur (IP) fragment of the enzyme. Interacts with NDUFAF3. Interacts with NDUFAF7. Interacts with CERS2. [4Fe-4S] cluster serves as cofactor. Dimethylation at Arg-118 by NDUFAF7 takes place after NDUFS2 assembles into the complex I, leading to stabilize the early intermediate complex.

It localises to the mitochondrion inner membrane. The catalysed reaction is a ubiquinone + NADH + 5 H(+)(in) = a ubiquinol + NAD(+) + 4 H(+)(out). Its function is as follows. Core subunit of the mitochondrial membrane respiratory chain NADH dehydrogenase (Complex I) which catalyzes electron transfer from NADH through the respiratory chain, using ubiquinone as an electron acceptor. Essential for the catalytic activity and assembly of complex I. Redox-sensitive, critical component of the oxygen-sensing pathway in the pulmonary vasculature which plays a key role in acute pulmonary oxygen-sensing and hypoxic pulmonary vasoconstriction. Plays an important role in carotid body sensing of hypoxia. Essential for glia-like neural stem and progenitor cell proliferation, differentiation and subsequent oligodendrocyte or neuronal maturation. This Pongo pygmaeus (Bornean orangutan) protein is NADH dehydrogenase [ubiquinone] iron-sulfur protein 2, mitochondrial (NDUFS2).